The chain runs to 237 residues: Phosphoribosylaminoimidazole-succinocarboxamide synthase (237 aa).

The protein belongs to the SAICAR synthetase family.

It catalyses the reaction 5-amino-1-(5-phospho-D-ribosyl)imidazole-4-carboxylate + L-aspartate + ATP = (2S)-2-[5-amino-1-(5-phospho-beta-D-ribosyl)imidazole-4-carboxamido]succinate + ADP + phosphate + 2 H(+). It functions in the pathway purine metabolism; IMP biosynthesis via de novo pathway; 5-amino-1-(5-phospho-D-ribosyl)imidazole-4-carboxamide from 5-amino-1-(5-phospho-D-ribosyl)imidazole-4-carboxylate: step 1/2. The chain is Phosphoribosylaminoimidazole-succinocarboxamide synthase from Escherichia coli O127:H6 (strain E2348/69 / EPEC).